A 405-amino-acid chain; its full sequence is uncharacterized protein (405 aa).

A run of 12 helical transmembrane segments spans residues I19–V39, V47–L67, I85–L105, A107–G127, G156–W176, G178–I198, G224–F244, G252–P272, V283–M303, I309–A329, T344–M364, and W366–L386.

Belongs to the major facilitator superfamily. YhhS family.

Its subcellular location is the cell inner membrane. This is an uncharacterized protein from Escherichia coli O6:H1 (strain CFT073 / ATCC 700928 / UPEC).